Here is a 317-residue protein sequence, read N- to C-terminus: MSTVTGAAGIGLATLAADGSVLDTWFPAPELTESGTSATSRLAVSDVPVELAALIGRDDDRRTETIAVRTVIGSLDDVAADPYDAYLRLHLLSHRLVAPHGLNAGGLFGVLTNVVWTNHGPCAIDGFEAVRARLRRRGPVTVYGVDKFPRMVDYVVPTGVRIADADRVRLGAHLAPGTTVMHEGFVNYNAGTLGASMVEGRISAGVVVGDGSDVGGGASIMGTLSGGGTHVISIGKRCLLGANSGLGISLGDDCVVEAGLYVTAGTRVTMPDSNSVKARELSGSSNLLFRRNSVSGAVEVLARDGQGIALNEDLHAN.

Mg(2+) is bound by residues Asp166 and Glu183. Glu199 functions as the Acyl-anhydride intermediate in the catalytic mechanism. Residues Arg201, Gly216, Ser219, Ala242, Glu257–Ala258, Gly265, Lys277, and Arg290–Ser293 contribute to the succinyl-CoA site.

Belongs to the type 2 tetrahydrodipicolinate N-succinyltransferase family. As to quaternary structure, homotrimer.

The protein resides in the cytoplasm. It carries out the reaction (S)-2,3,4,5-tetrahydrodipicolinate + succinyl-CoA + H2O = (S)-2-succinylamino-6-oxoheptanedioate + CoA. The protein operates within amino-acid biosynthesis; L-lysine biosynthesis via DAP pathway; LL-2,6-diaminopimelate from (S)-tetrahydrodipicolinate (succinylase route): step 1/3. Functionally, catalyzes the conversion of the cyclic tetrahydrodipicolinate (THDP) into the acyclic N-succinyl-L-2-amino-6-oxopimelate using succinyl-CoA. This chain is 2,3,4,5-tetrahydropyridine-2,6-dicarboxylate N-succinyltransferase (dapD), found in Mycobacterium tuberculosis (strain CDC 1551 / Oshkosh).